The primary structure comprises 462 residues: Succinate semialdehyde dehydrogenase [NAD(P)+] Sad (462 aa).

NADP(+)-binding positions include 136–137, 160–163, and 212–213; these read WN, KHAP, and GS. Glutamate 234 acts as the Proton acceptor in catalysis. Leucine 235 serves as a coordination point for NADP(+). Cysteine 268 (nucleophile) is an active-site residue. An NADP(+)-binding site is contributed by glutamate 365.

Belongs to the aldehyde dehydrogenase family. Homodimer.

The enzyme catalyses succinate semialdehyde + NAD(+) + H2O = succinate + NADH + 2 H(+). The catalysed reaction is succinate semialdehyde + NADP(+) + H2O = succinate + NADPH + 2 H(+). Its pathway is amino-acid degradation; 4-aminobutanoate degradation. Catalyzes the NAD(+)-dependent oxidation of succinate semialdehyde to succinate. It acts preferentially with NAD as cosubstrate but can also use NADP. Prevents the toxic accumulation of succinate semialdehyde (SSA) and plays an important role when arginine and putrescine are used as the sole nitrogen or carbon sources. This is Succinate semialdehyde dehydrogenase [NAD(P)+] Sad (sad) from Escherichia coli (strain K12).